Reading from the N-terminus, the 262-residue chain is Phosphatidylglycerol--prolipoprotein diacylglyceryl transferase (262 aa).

3 helical membrane passes run 17 to 37 (LKVH…WILA), 57 to 77 (LVFY…ALFY), and 92 to 112 (IWEG…AMYA). Position 140 (arginine 140) interacts with a 1,2-diacyl-sn-glycero-3-phospho-(1'-sn-glycerol). A run of 2 helical transmembrane segments spans residues 200-220 (MAVS…VEFV) and 234-254 (WLTM…VLLA).

It belongs to the Lgt family.

The protein resides in the cell inner membrane. It carries out the reaction L-cysteinyl-[prolipoprotein] + a 1,2-diacyl-sn-glycero-3-phospho-(1'-sn-glycerol) = an S-1,2-diacyl-sn-glyceryl-L-cysteinyl-[prolipoprotein] + sn-glycerol 1-phosphate + H(+). The protein operates within protein modification; lipoprotein biosynthesis (diacylglyceryl transfer). Its function is as follows. Catalyzes the transfer of the diacylglyceryl group from phosphatidylglycerol to the sulfhydryl group of the N-terminal cysteine of a prolipoprotein, the first step in the formation of mature lipoproteins. The protein is Phosphatidylglycerol--prolipoprotein diacylglyceryl transferase of Methylococcus capsulatus (strain ATCC 33009 / NCIMB 11132 / Bath).